The following is an 877-amino-acid chain: DNA polymerase I (877 aa).

The 5'-3' exonuclease domain maps to 180–272 (TPSQFIDLKA…GLEDTLLKEK (93 aa)). A 3'-5' exonuclease domain is found at 312–468 (FEIVTDKSSV…AKEKMMAELI (157 aa)).

Belongs to the DNA polymerase type-A family. In terms of assembly, single-chain monomer with multiple functions.

It catalyses the reaction DNA(n) + a 2'-deoxyribonucleoside 5'-triphosphate = DNA(n+1) + diphosphate. Functionally, in addition to polymerase activity, this DNA polymerase exhibits 3'-5' and 5'-3' exonuclease activity. This is DNA polymerase I (polA) from Lactococcus lactis subsp. cremoris (strain MG1363).